A 338-amino-acid chain; its full sequence is HTH-type transcriptional regulator SyrM 1 (338 aa).

The HTH lysR-type domain maps to 35 to 92 (LDLNTLLALEALLEHRNVTQAARHLGLSQPSVSRALIRLRGVFNDDLLVRGSSGMVPT). Residues 52–72 (VTQAARHLGLSQPSVSRALIR) constitute a DNA-binding region (H-T-H motif).

Belongs to the LysR transcriptional regulatory family.

Its function is as follows. Transcriptional activator that regulates the expression of genes involved in symbiosis. Among other targets it acts on the nolWBTUV operon. The chain is HTH-type transcriptional regulator SyrM 1 (syrM1) from Sinorhizobium fredii (strain NBRC 101917 / NGR234).